We begin with the raw amino-acid sequence, 222 residues long: UPF0502 protein XAC4278 (222 aa).

This sequence belongs to the UPF0502 family.

In Xanthomonas axonopodis pv. citri (strain 306), this protein is UPF0502 protein XAC4278.